The chain runs to 299 residues: Taste receptor type 2 member 1 (299 aa).

The Extracellular portion of the chain corresponds to 1–9 (MLESHLIIY). Residues 10–30 (FLLAVIQFLLGIFTNGIIVVV) traverse the membrane as a helical segment. At 31-55 (NGIDLIKHRKMAPLDLLLSCLAVSR) the chain is on the cytoplasmic side. Residues 56–76 (IFLQLFIFYVNVIVIFFIEFI) traverse the membrane as a helical segment. At 77–81 (MCSAN) the chain is on the extracellular side. Residues 82-102 (CAILLFVNELELWLATWLGVF) traverse the membrane as a helical segment. Over 103-124 (YCAKVASVRHPLFIWLKMRISK) the chain is Cytoplasmic. Residues 125-145 (LVPWMILGSLLYVSMICVFHS) traverse the membrane as a helical segment. Residues 146–178 (KYAGFMVPHFLRNFFSQNATIQKEDTLAIQIFS) lie on the Extracellular side of the membrane. N-linked (GlcNAc...) asparagine glycosylation is present at N163. Residues 179–199 (FVAEFSVPLLIFLVAVLLLIF) traverse the membrane as a helical segment. The Cytoplasmic segment spans residues 200–222 (SLGRHTRQMRNTVAGSRVPGRGA). The helical transmembrane segment at 223–243 (PISALLSILSFLILYFSHCMI) threads the bilayer. At 244-257 (KVFLSSLKFHVRRF) the chain is on the extracellular side. The chain crosses the membrane as a helical span at residues 258 to 278 (IFLFFILVIGIYPSGHSLILI). Residues 279-299 (LGNPKLKQNAKKFLLHSKCCQ) lie on the Cytoplasmic side of the membrane.

Belongs to the G-protein coupled receptor T2R family.

It is found in the membrane. Functionally, receptor that may play a role in the perception of bitterness and is gustducin-linked. May play a role in sensing the chemical composition of the gastrointestinal content. The activity of this receptor may stimulate alpha gustducin, mediate PLC-beta-2 activation and lead to the gating of TRPM5. The sequence is that of Taste receptor type 2 member 1 (TAS2R1) from Pan paniscus (Pygmy chimpanzee).